Here is a 417-residue protein sequence, read N- to C-terminus: Voltage-gated ClC-type chloride channel ClcB (417 aa).

The Cytoplasmic segment spans residues 1–4; that stretch reads MFRR. The chain crosses the membrane as a helical span at residues 5–25; sequence LLIATLIGILAALAVAAFRHA. Over 26 to 53 the chain is Periplasmic; it reads MQLLEWIFLSNDTGSLVNAAEGLSPWRR. Residues 54-74 traverse the membrane as a helical segment; it reads LITPALGGLAAGLLLWGWQKM. Residues 75–145 are Cytoplasmic-facing; the sequence is NQQRPHAPTD…RRFTPREEWK (71 aa). A helical transmembrane segment spans residues 146-166; sequence LWIASGAAAGMAGAYHAPLAG. Residues 167–172 are Periplasmic-facing; sequence SLFIAE. The helical transmembrane segment at 173–195 threads the bilayer; it reads ILFGTLMLASLGPVVVSAVVALL. At 196–221 the chain is on the cytoplasmic side; that stretch reads TTHVLNGSDSLLYTVHLTVDLYAREY. The chain crosses the membrane as a helical span at residues 222 to 242; the sequence is VMIVSTGLVAGLWGPLLMWLM. Topologically, residues 243 to 257 are periplasmic; sequence TASHNSFLRLKLSPP. A helical transmembrane segment spans residues 258–278; that stretch reads WQLALGGLIVGLLSLLTPTVW. The Cytoplasmic segment spans residues 279–287; it reads GNGYSVVQS. The helical transmembrane segment at 288–308 threads the bilayer; sequence FLLSPPLFSLIGGIFACKILA. The Periplasmic segment spans residues 309–315; sequence VLASSGS. A helical transmembrane segment spans residues 316 to 336; sequence GAPGGVFTPTLFVGLSIGMFL. Residues 337–338 lie on the Cytoplasmic side of the membrane; it reads GR. A helical transmembrane segment spans residues 339-359; that stretch reads IWGFWLPGSDEIAILLGLAGM. Residues 360 to 379 lie on the Periplasmic side of the membrane; the sequence is ATLLAATTHAPIMSTLMICE. The helical transmembrane segment at 380-400 threads the bilayer; it reads MTGEYQLLPGLLIACVVASVL. Over 401 to 417 the chain is Cytoplasmic; the sequence is SRTLRHDSIYRQHAAEH.

This sequence belongs to the chloride channel (TC 2.A.49) family. ClcB subfamily.

The protein resides in the cell inner membrane. Functionally, probably acts as an electrical shunt for an outwardly-directed proton pump that is linked to amino acid decarboxylation, as part of the extreme acid resistance (XAR) response. The sequence is that of Voltage-gated ClC-type chloride channel ClcB (clcB) from Salmonella typhi.